Consider the following 192-residue polypeptide: Potassium-transporting ATPase KdpC subunit (192 aa).

Residues 7-27 (PLIVLFVVLAALTGLAYPAVM) form a helical membrane-spanning segment.

This sequence belongs to the KdpC family. The system is composed of three essential subunits: KdpA, KdpB and KdpC.

Its subcellular location is the cell inner membrane. Part of the high-affinity ATP-driven potassium transport (or Kdp) system, which catalyzes the hydrolysis of ATP coupled with the electrogenic transport of potassium into the cytoplasm. This subunit acts as a catalytic chaperone that increases the ATP-binding affinity of the ATP-hydrolyzing subunit KdpB by the formation of a transient KdpB/KdpC/ATP ternary complex. The chain is Potassium-transporting ATPase KdpC subunit from Paraburkholderia xenovorans (strain LB400).